A 431-amino-acid polypeptide reads, in one-letter code: Tryptophan--tRNA ligase (431 aa).

ATP contacts are provided by residues 12–14 (TPS) and 20–21 (GN). Residues 13–21 (PSGTPHLGN) carry the 'HIGH' region motif. D145 is a binding site for L-tryptophan. Residues 157-159 (GRD), L197, and 204-208 (KMSKS) contribute to the ATP site. The short motif at 204-208 (KMSKS) is the 'KMSKS' region element.

Belongs to the class-I aminoacyl-tRNA synthetase family. As to quaternary structure, homodimer.

The protein localises to the cytoplasm. It carries out the reaction tRNA(Trp) + L-tryptophan + ATP = L-tryptophyl-tRNA(Trp) + AMP + diphosphate + H(+). In terms of biological role, catalyzes the attachment of tryptophan to tRNA(Trp). The chain is Tryptophan--tRNA ligase from Xanthomonas campestris pv. campestris (strain ATCC 33913 / DSM 3586 / NCPPB 528 / LMG 568 / P 25).